A 206-amino-acid chain; its full sequence is Transcription antitermination protein NusB (206 aa).

The tract at residues 135 to 206 is disordered; the sequence is ARGEKTSAQE…ETQPPGVNEV (72 aa). Positions 169–180 are enriched in low complexity; that stretch reads ATPATTPVTTTV.

The protein belongs to the NusB family.

Functionally, involved in transcription antitermination. Required for transcription of ribosomal RNA (rRNA) genes. Binds specifically to the boxA antiterminator sequence of the ribosomal RNA (rrn) operons. The chain is Transcription antitermination protein NusB from Heliobacterium modesticaldum (strain ATCC 51547 / Ice1).